Reading from the N-terminus, the 60-residue chain is UPF0434 protein YcaR (60 aa).

The protein belongs to the UPF0434 family.

The protein is UPF0434 protein YcaR of Escherichia coli O139:H28 (strain E24377A / ETEC).